Consider the following 391-residue polypeptide: Succinate--CoA ligase [ADP-forming] subunit beta (391 aa).

The region spanning 9 to 246 is the ATP-grasp domain; that stretch reads KHLFADYDIP…ITQEDEAEVQ (238 aa). ATP-binding positions include Lys46, 53–55, Glu99, Leu102, and Glu107; that span reads GRG. The Mg(2+) site is built by Asn199 and Asp213. Residues Asn266 and 323–325 each bind substrate; that span reads GIV.

This sequence belongs to the succinate/malate CoA ligase beta subunit family. As to quaternary structure, heterotetramer of two alpha and two beta subunits. Requires Mg(2+) as cofactor.

The enzyme catalyses succinate + ATP + CoA = succinyl-CoA + ADP + phosphate. The catalysed reaction is GTP + succinate + CoA = succinyl-CoA + GDP + phosphate. The protein operates within carbohydrate metabolism; tricarboxylic acid cycle; succinate from succinyl-CoA (ligase route): step 1/1. Its function is as follows. Succinyl-CoA synthetase functions in the citric acid cycle (TCA), coupling the hydrolysis of succinyl-CoA to the synthesis of either ATP or GTP and thus represents the only step of substrate-level phosphorylation in the TCA. The beta subunit provides nucleotide specificity of the enzyme and binds the substrate succinate, while the binding sites for coenzyme A and phosphate are found in the alpha subunit. The protein is Succinate--CoA ligase [ADP-forming] subunit beta of Alkalilimnicola ehrlichii (strain ATCC BAA-1101 / DSM 17681 / MLHE-1).